Consider the following 633-residue polypeptide: MFQLLRRAHGLCMPSSLYFSRLVNRSLLSKSPTLAKIVHAQLLEAGFVRTTYWGNRCLQLYFKSGSVINALQLFDDIPDKNTITWNVCLKGLFKNGYLNNALDLFDEMPERDVVSWNTMISGLVSCGFHEYGIRVFFDMQRWEIRPTEFTFSILASLVTCVRHGEQIHGNAICSGVSRYNLVVWNSVMDMYRRLGVFDYALSVFLTMEDRDVVSWNCLILSCSDSGNKEVALDQFWLMREMEIQPDEYTVSMVVSICSDLRELSKGKQALALCIKMGFLSNSIVLGAGIDMFSKCNRLDDSVKLFRELEKWDSVLCNSMIGSYSWHCCGEDALRLFILAMTQSVRPDKFTFSSVLSSMNAVMLDHGADVHSLVIKLGFDLDTAVATSLMEMYFKTGSVDLAMGVFAKTDGKDLIFWNTVIMGLARNSRAVESLAIFNQLLMNQSLKPDRVTLMGILVACCYAGFVNEGIQIFSSMEKAHGVNPGNEHYACIIELLCRVGMINEAKDIADKIPFEPSSHIWEPILCASLDLGDTRLAETVAKTMLESEPKSSFPYLVLIKIYEMTWRWENSVKLRYAMNEHKLKSAQGSSKISIESSVFSFEADQLQIHGGHDTCALLDLLSWDSFDQKIHWSA.

The transit peptide at 1–30 (MFQLLRRAHGLCMPSSLYFSRLVNRSLLSK) directs the protein to the mitochondrion. PPR repeat units follow at residues 50 to 80 (TTYW…IPDK), 81 to 111 (NTIT…MPER), 112 to 146 (DVVS…EIRP), 147 to 178 (TEFT…GVSR), 180 to 210 (NLVV…MEDR), 211 to 245 (DVVS…EIQP), 246 to 280 (DEYT…GFLS), 281 to 311 (NSIV…LEKW), 312 to 346 (DSVL…SVRP), 347 to 380 (DKFT…GFDL), 381 to 411 (DTAV…TDGK), 412 to 447 (DLIF…SLKP), 448 to 483 (DRVT…GVNP), and 484 to 514 (GNEH…IPFE). The tract at residues 519 to 594 (IWEPILCASL…AQGSSKISIE (76 aa)) is type E motif.

This sequence belongs to the PPR family. PCMP-E subfamily.

It localises to the mitochondrion. This is Pentatricopeptide repeat-containing protein At1g43980, mitochondrial (PCMP-E58) from Arabidopsis thaliana (Mouse-ear cress).